A 629-amino-acid chain; its full sequence is UvrABC system protein C (629 aa).

One can recognise a GIY-YIG domain in the interval 26 to 105 (TSPGIYQFKN…IKELKPRYNV (80 aa)). In terms of domain architecture, UVR spans 219–254 (SALIRSLTENMHLAATELRFEQAAEIKAQIESLKRY).

This sequence belongs to the UvrC family. As to quaternary structure, interacts with UvrB in an incision complex.

Its subcellular location is the cytoplasm. In terms of biological role, the UvrABC repair system catalyzes the recognition and processing of DNA lesions. UvrC both incises the 5' and 3' sides of the lesion. The N-terminal half is responsible for the 3' incision and the C-terminal half is responsible for the 5' incision. The polypeptide is UvrABC system protein C (Chlorobium chlorochromatii (strain CaD3)).